Reading from the N-terminus, the 297-residue chain is 33 kDa chaperonin (297 aa).

Intrachain disulfides connect Cys232–Cys234 and Cys266–Cys269.

Belongs to the HSP33 family. In terms of processing, under oxidizing conditions two disulfide bonds are formed involving the reactive cysteines. Under reducing conditions zinc is bound to the reactive cysteines and the protein is inactive.

Its subcellular location is the cytoplasm. Functionally, redox regulated molecular chaperone. Protects both thermally unfolding and oxidatively damaged proteins from irreversible aggregation. Plays an important role in the bacterial defense system toward oxidative stress. The polypeptide is 33 kDa chaperonin (Pseudomonas aeruginosa (strain LESB58)).